We begin with the raw amino-acid sequence, 895 residues long: Probable methyltransferase PMT27 (895 aa).

Over 1 to 16 the chain is Cytoplasmic; the sequence is MAFGRGRGNKRTSTSS. A helical; Signal-anchor for type II membrane protein membrane pass occupies residues 17 to 37; it reads YASTITMVIFVALCVFGVWML. Residues 38–895 are Lumenal-facing; that stretch reads SSNSVIPPQI…KGFWRPETSQ (858 aa). Polar residues predominate over residues 43-52; sequence IPPQITQGST. Residues 43–362 are disordered; the sequence is IPPQITQGST…QRQTSESNTV (320 aa). A compositionally biased stretch (basic and acidic residues) spans 90–114; it reads NPGKLPDDAVKSEDEQRKSAKEKSE. Over residues 115–127 the composition is skewed to low complexity; the sequence is TTSSKTQTQETQQ. A compositionally biased stretch (basic and acidic residues) spans 129-143; it reads NDDKISEEKEKDNGK. Asparagine 145 is a glycosylation site (N-linked (GlcNAc...) asparagine). Over residues 154–174 the composition is skewed to basic and acidic residues; the sequence is GQMKKVVKEFEKEQKQQRDED. A compositionally biased stretch (low complexity) spans 176–191; sequence GTQPKGTQGQEQGQGK. Composition is skewed to polar residues over residues 199-232 and 243-256; these read GNKQ…GETS and PEEQ…TGQQ. Residues 257 to 320 show a composition bias toward basic and acidic residues; that stretch reads NEEKTTASEE…RKDEKKHEQG (64 aa). The span at 337–346 shows a compositional bias: polar residues; that stretch reads SQKSWKSQAT. N-linked (GlcNAc...) asparagine glycans are attached at residues asparagine 375 and asparagine 709.

It belongs to the methyltransferase superfamily.

It localises to the endoplasmic reticulum membrane. The polypeptide is Probable methyltransferase PMT27 (Arabidopsis thaliana (Mouse-ear cress)).